The primary structure comprises 392 residues: Probable protein phosphatase 2C 78 (392 aa).

Residues 39-342 form the PPM-type phosphatase domain; it reads ASGEYSIAVA…DDITVVVVYL (304 aa). Mn(2+)-binding residues include D73, G74, D274, and D333.

This sequence belongs to the PP2C family. Mg(2+) serves as cofactor. It depends on Mn(2+) as a cofactor.

The enzyme catalyses O-phospho-L-seryl-[protein] + H2O = L-seryl-[protein] + phosphate. It carries out the reaction O-phospho-L-threonyl-[protein] + H2O = L-threonyl-[protein] + phosphate. The polypeptide is Probable protein phosphatase 2C 78 (Oryza sativa subsp. japonica (Rice)).